We begin with the raw amino-acid sequence, 476 residues long: Adenosylhomocysteinase (476 aa).

Residues T67, D142, and E202 each contribute to the substrate site. 203-205 (TTT) lines the NAD(+) pocket. 2 residues coordinate substrate: K232 and D236. Residues N237, 266-271 (GYGDVG), E289, N324, 345-347 (IGH), and N390 contribute to the NAD(+) site.

This sequence belongs to the adenosylhomocysteinase family. NAD(+) is required as a cofactor.

Its subcellular location is the cytoplasm. It catalyses the reaction S-adenosyl-L-homocysteine + H2O = L-homocysteine + adenosine. It participates in amino-acid biosynthesis; L-homocysteine biosynthesis; L-homocysteine from S-adenosyl-L-homocysteine: step 1/1. May play a key role in the regulation of the intracellular concentration of adenosylhomocysteine. The sequence is that of Adenosylhomocysteinase from Prochlorococcus marinus (strain MIT 9211).